Reading from the N-terminus, the 337-residue chain is Casein kinase I isoform alpha-like (337 aa).

N6-acetyllysine is present on lysine 8. The Protein kinase domain occupies 17–285 (YKLVRKIGSG…YLRQLFRILF (269 aa)). ATP-binding positions include 23–31 (IGSGSFGDV) and lysine 46. The active-site Proton acceptor is the aspartate 136. Residues 309–325 (AASSSGQGQQAQTQTGK) are compositionally biased toward low complexity. The tract at residues 309 to 337 (AASSSGQGQQAQTQTGKQTEKNKNNVKDN) is disordered. A compositionally biased stretch (basic and acidic residues) spans 326–337 (QTEKNKNNVKDN).

Belongs to the protein kinase superfamily. CK1 Ser/Thr protein kinase family. Casein kinase I subfamily. Interacts with FAM83A, FAM83B, FAM83C, FAM83D, FAM83E, FAM83F, FAM83G and FAM83H (via DUF1669).

The protein localises to the cytoplasm. It catalyses the reaction L-seryl-[protein] + ATP = O-phospho-L-seryl-[protein] + ADP + H(+). The catalysed reaction is L-threonyl-[protein] + ATP = O-phospho-L-threonyl-[protein] + ADP + H(+). Its function is as follows. Casein kinases are operationally defined by their preferential utilization of acidic proteins such as caseins as substrates. It can phosphorylate a large number of proteins. Participates in Wnt signaling. This chain is Casein kinase I isoform alpha-like (CSNK1A1L), found in Homo sapiens (Human).